The primary structure comprises 193 residues: dTTP/UTP pyrophosphatase (193 aa).

The Proton acceptor role is filled by aspartate 73.

Belongs to the Maf family. YhdE subfamily. A divalent metal cation serves as cofactor.

It localises to the cytoplasm. The enzyme catalyses dTTP + H2O = dTMP + diphosphate + H(+). It carries out the reaction UTP + H2O = UMP + diphosphate + H(+). Nucleoside triphosphate pyrophosphatase that hydrolyzes dTTP and UTP. May have a dual role in cell division arrest and in preventing the incorporation of modified nucleotides into cellular nucleic acids. In Caulobacter vibrioides (strain ATCC 19089 / CIP 103742 / CB 15) (Caulobacter crescentus), this protein is dTTP/UTP pyrophosphatase.